Reading from the N-terminus, the 348-residue chain is Dihydroorotase (348 aa).

2 residues coordinate Zn(2+): histidine 17 and histidine 19. Residues 19-21 (HLR) and asparagine 45 each bind substrate. Lysine 103, histidine 140, and histidine 178 together coordinate Zn(2+). Lysine 103 carries the N6-carboxylysine modification. Residue histidine 140 participates in substrate binding. Leucine 223 lines the substrate pocket. Residue aspartate 251 participates in Zn(2+) binding. Aspartate 251 is an active-site residue. The substrate site is built by histidine 255 and alanine 267.

Belongs to the metallo-dependent hydrolases superfamily. DHOase family. Class II DHOase subfamily. In terms of assembly, homodimer. Zn(2+) is required as a cofactor.

The catalysed reaction is (S)-dihydroorotate + H2O = N-carbamoyl-L-aspartate + H(+). The protein operates within pyrimidine metabolism; UMP biosynthesis via de novo pathway; (S)-dihydroorotate from bicarbonate: step 3/3. In terms of biological role, catalyzes the reversible cyclization of carbamoyl aspartate to dihydroorotate. The protein is Dihydroorotase of Enterobacter sp. (strain 638).